Here is a 263-residue protein sequence, read N- to C-terminus: Endonuclease 8 (263 aa).

Catalysis depends on Pro-2, which acts as the Schiff-base intermediate with DNA. Glu-3 functions as the Proton donor in the catalytic mechanism. The active-site Proton donor; for beta-elimination activity is Lys-53. Gln-70, Arg-125, and Asn-169 together coordinate DNA. Residues 229 to 263 (KVFHRDGEVCERCGGIIEKTTLSSRPFYWCPHCQK) form an FPG-type zinc finger. Arg-253 (proton donor; for delta-elimination activity) is an active-site residue.

It belongs to the FPG family. Zn(2+) is required as a cofactor.

The catalysed reaction is 2'-deoxyribonucleotide-(2'-deoxyribose 5'-phosphate)-2'-deoxyribonucleotide-DNA = a 3'-end 2'-deoxyribonucleotide-(2,3-dehydro-2,3-deoxyribose 5'-phosphate)-DNA + a 5'-end 5'-phospho-2'-deoxyribonucleoside-DNA + H(+). In terms of biological role, involved in base excision repair of DNA damaged by oxidation or by mutagenic agents. Acts as a DNA glycosylase that recognizes and removes damaged bases. Has a preference for oxidized pyrimidines, such as thymine glycol, 5,6-dihydrouracil and 5,6-dihydrothymine. Has AP (apurinic/apyrimidinic) lyase activity and introduces nicks in the DNA strand. Cleaves the DNA backbone by beta-delta elimination to generate a single-strand break at the site of the removed base with both 3'- and 5'-phosphates. This Salmonella newport (strain SL254) protein is Endonuclease 8.